The chain runs to 140 residues: MPLESSSSMPLSFPSLLPSVPHNTNPSPPLMSYITSQEMKCILHWFANWSGPQRERFLEDLVAKAVPEKLQPLLDSLEQLSVSGADRPPSIFECQLHLWDQWFRGWAEQERNEFVRQLEFSEPDFVAKFYQAVAATAGKD.

The protein resides in the mitochondrion. This is an uncharacterized protein from Homo sapiens (Human).